We begin with the raw amino-acid sequence, 320 residues long: Phospho-N-acetylmuramoyl-pentapeptide-transferase (320 aa).

A run of 10 helical transmembrane segments spans residues 7 to 27, 50 to 70, 77 to 97, 113 to 133, 148 to 168, 173 to 193, 198 to 216, 221 to 241, 247 to 267, and 297 to 317; these read ILAIIISFLIVLIVMPIVIPF, GTPTMGGLVIGLAIIVTSLIF, IGAPLIATVAFGLIGFIDDFI, LVLQFLISITFLYVIQKHLGS, WAYVPVMSVLMVFTVNAVNLT, GLASGVTMIVSLFLAIISIFS, MAIFSGAIVGSCMGFLRYN, VVFMGDTGSLMLGGSIFAIAV, VLVLVIGGLYIIEAVSVMLQV, and VVVVFWIFTILFCLLALAMIQ.

This sequence belongs to the glycosyltransferase 4 family. MraY subfamily. The cofactor is Mg(2+).

It localises to the cell membrane. It catalyses the reaction UDP-N-acetyl-alpha-D-muramoyl-L-alanyl-gamma-D-glutamyl-meso-2,6-diaminopimeloyl-D-alanyl-D-alanine + di-trans,octa-cis-undecaprenyl phosphate = di-trans,octa-cis-undecaprenyl diphospho-N-acetyl-alpha-D-muramoyl-L-alanyl-D-glutamyl-meso-2,6-diaminopimeloyl-D-alanyl-D-alanine + UMP. The protein operates within cell wall biogenesis; peptidoglycan biosynthesis. In terms of biological role, catalyzes the initial step of the lipid cycle reactions in the biosynthesis of the cell wall peptidoglycan: transfers peptidoglycan precursor phospho-MurNAc-pentapeptide from UDP-MurNAc-pentapeptide onto the lipid carrier undecaprenyl phosphate, yielding undecaprenyl-pyrophosphoryl-MurNAc-pentapeptide, known as lipid I. This Caldicellulosiruptor bescii (strain ATCC BAA-1888 / DSM 6725 / KCTC 15123 / Z-1320) (Anaerocellum thermophilum) protein is Phospho-N-acetylmuramoyl-pentapeptide-transferase.